The chain runs to 122 residues: Large ribosomal subunit protein uL14 (122 aa).

It belongs to the universal ribosomal protein uL14 family. In terms of assembly, part of the 50S ribosomal subunit. Forms a cluster with proteins L3 and L19. In the 70S ribosome, L14 and L19 interact and together make contacts with the 16S rRNA in bridges B5 and B8.

Its function is as follows. Binds to 23S rRNA. Forms part of two intersubunit bridges in the 70S ribosome. This Magnetococcus marinus (strain ATCC BAA-1437 / JCM 17883 / MC-1) protein is Large ribosomal subunit protein uL14.